Consider the following 150-residue polypeptide: PTTG1IP family member 2 (150 aa).

The N-terminal stretch at 1–19 is a signal peptide; the sequence is MCWLRAWSHILLPVFLSVA. At 20 to 98 the chain is on the extracellular side; that stretch reads LIQLIFNLSD…SIFWANCNVD (79 aa). Asn26 carries N-linked (GlcNAc...) asparagine glycosylation. Residues 99 to 119 traverse the membrane as a helical segment; that stretch reads LFGIVMLILIVILALAFLWYC. Residues 120 to 150 lie on the Cytoplasmic side of the membrane; it reads LAYYFYMQQHMALYARHGQVPVYNWDAPGDW.

The protein resides in the membrane. This Mus musculus (Mouse) protein is PTTG1IP family member 2.